We begin with the raw amino-acid sequence, 361 residues long: UDP-N-acetylglucosamine--N-acetylmuramyl-(pentapeptide) pyrophosphoryl-undecaprenol N-acetylglucosamine transferase (361 aa).

UDP-N-acetyl-alpha-D-glucosamine contacts are provided by residues 12-14, Asn126, Arg167, Ser192, Ile247, and Gln292; that span reads TGG.

The protein belongs to the glycosyltransferase 28 family. MurG subfamily.

It is found in the cell inner membrane. The enzyme catalyses di-trans,octa-cis-undecaprenyl diphospho-N-acetyl-alpha-D-muramoyl-L-alanyl-D-glutamyl-meso-2,6-diaminopimeloyl-D-alanyl-D-alanine + UDP-N-acetyl-alpha-D-glucosamine = di-trans,octa-cis-undecaprenyl diphospho-[N-acetyl-alpha-D-glucosaminyl-(1-&gt;4)]-N-acetyl-alpha-D-muramoyl-L-alanyl-D-glutamyl-meso-2,6-diaminopimeloyl-D-alanyl-D-alanine + UDP + H(+). Its pathway is cell wall biogenesis; peptidoglycan biosynthesis. Cell wall formation. Catalyzes the transfer of a GlcNAc subunit on undecaprenyl-pyrophosphoryl-MurNAc-pentapeptide (lipid intermediate I) to form undecaprenyl-pyrophosphoryl-MurNAc-(pentapeptide)GlcNAc (lipid intermediate II). This is UDP-N-acetylglucosamine--N-acetylmuramyl-(pentapeptide) pyrophosphoryl-undecaprenol N-acetylglucosamine transferase from Syntrophus aciditrophicus (strain SB).